The primary structure comprises 300 residues: GTPase Era (300 aa).

The region spanning 8–176 (RCGYVAIVGR…EKVIADHLPE (169 aa)) is the Era-type G domain. The segment at 16 to 23 (GRPNVGKS) is G1. 16–23 (GRPNVGKS) is a binding site for GTP. Residues 42 to 46 (QTTRH) form a G2 region. The G3 stretch occupies residues 63–66 (DTPG). Residues 63–67 (DTPGM) and 125–128 (NKTD) each bind GTP. Residues 125-128 (NKTD) form a G4 region. Positions 155–157 (ISA) are G5. The KH type-2 domain maps to 199–283 (VREKIMRQLG…MLNLWVKVKG (85 aa)).

This sequence belongs to the TRAFAC class TrmE-Era-EngA-EngB-Septin-like GTPase superfamily. Era GTPase family. Monomer.

It localises to the cytoplasm. Its subcellular location is the cell inner membrane. Functionally, an essential GTPase that binds both GDP and GTP, with rapid nucleotide exchange. Plays a role in 16S rRNA processing and 30S ribosomal subunit biogenesis and possibly also in cell cycle regulation and energy metabolism. This chain is GTPase Era, found in Pseudomonas fluorescens (strain Pf0-1).